A 275-amino-acid polypeptide reads, in one-letter code: tRNA pseudouridine synthase A (275 aa).

The active-site Nucleophile is Asp-55. Tyr-111 lines the substrate pocket.

It belongs to the tRNA pseudouridine synthase TruA family.

The enzyme catalyses uridine(38/39/40) in tRNA = pseudouridine(38/39/40) in tRNA. In terms of biological role, formation of pseudouridine at positions 38, 39 and 40 in the anticodon stem and loop of transfer RNAs. The chain is tRNA pseudouridine synthase A from Methanococcoides burtonii (strain DSM 6242 / NBRC 107633 / OCM 468 / ACE-M).